The following is a 410-amino-acid chain: Transcription factor Dp-1 (410 aa).

K3 bears the N6-acetyllysine mark. S23 bears the Phosphoserine; by CDK2 mark. The disordered stretch occupies residues 77-114 (VVGSPHTPNTHFVSQNQPSDPSPWSAGKRNRKGEKNGK). Over residues 82–95 (HTPNTHFVSQNQPS) the composition is skewed to polar residues. Residues 104–114 (KRNRKGEKNGK) are compositionally biased toward basic residues. The interaction with CEBPA stretch occupies residues 105-127 (RNRKGEKNGKGLRHFSMKVCEKV). A DNA-binding region spans residues 113-195 (GKGLRHFSMK…KKEIKWIGLP (83 aa)). The DEF box motif lies at 161 to 195 (DQKNIRRRVYDALNVLMAMNIISKEKKEIKWIGLP). Residues 204–277 (SLEVERQRRL…KKTVIDCSIS (74 aa)) are dimerization. Positions 211–327 (RRLERIKQKQ…DLRVARSLVP (117 aa)) are enhances binding of RB protein to E2F. The segment at 214–246 (ERIKQKQSQLQELILQQIAFKNLVQRNRQVEQQ) is DCB1. The segment at 259-315 (LPFIIVNTSKKTVIDCSISNDKFEYLFNFDNTFEIHDDIEVLKRMGMACGLESGSCS) is DCB2. The tract at residues 370-410 (GALATSSSGSQYSGSRVETPVSCVGEDDEDDEDFNENEEED) is disordered. Low complexity predominate over residues 375–384 (SSSGSQYSGS). A compositionally biased stretch (acidic residues) spans 394 to 410 (GEDDEDDEDFNENEEED).

Belongs to the E2F/DP family. As to quaternary structure, component of the E2F:DP transcription factor complex. Forms heterodimers with E2F family members. The complex can interact with hypophosphorylated retinoblastoma protein RB1 and related proteins (RBL1 and RBL2) that inhibit the E2F transactivation domain. This repression involves recruitment of histone deacetylase (HDAC). During the cell cycle, from mid-to-late G1 phase, RB family members become phosphorylated, detach from the DRTF1/E2F complex to render E2F transcriptionally active. Part of the E2F6.com-1 complex in G0 phase is composed of E2F6, MGA, MAX, TFDP1, CBX3, BAT8, EUHMTASE1, RING1, RNF2, MBLR, L3MBTL2 YAF2. Component of the DREAM complex (also named LINC complex) at least composed of E2F4, E2F5, LIN9, LIN37, LIN52, LIN54, MYBL1, MYBL2, RBL1, RBL2, RBBP4, TFDP1 and TFDP2. The complex exists in quiescent cells where it represses cell cycle-dependent genes. It dissociates in S phase when LIN9, LIN37, LIN52 and LIN54 form a subcomplex that binds to MYBL2. The complex TFDP1:E2F1 interacts with CEBPA; the interaction prevents CEBPA binding to target gene promoters and represses its transcriptional activity. Ubiquitinated by the BCR(KBTBD5) complex, leading to its subsequent degradation. In terms of processing, phosphorylation by E2F1-bound cyclin A-CDK2, in the S phase, inhibits E2F-mediated DNA binding and transactivation.

It localises to the nucleus. It is found in the cytoplasm. In terms of biological role, can stimulate E2F-dependent transcription. Binds DNA cooperatively with E2F family members through the E2 recognition site, 5'-TTTC[CG]CGC-3', found in the promoter region of a number of genes whose products are involved in cell cycle regulation or in DNA replication. The E2F1:DP complex appears to mediate both cell proliferation and apoptosis. Blocks adipocyte differentiation by repressing CEBPA binding to its target gene promoters. This chain is Transcription factor Dp-1 (TFDP1), found in Bos taurus (Bovine).